The primary structure comprises 92 residues: Small ribosomal subunit protein uS19 (92 aa).

Belongs to the universal ribosomal protein uS19 family.

Protein S19 forms a complex with S13 that binds strongly to the 16S ribosomal RNA. This Pelobacter propionicus (strain DSM 2379 / NBRC 103807 / OttBd1) protein is Small ribosomal subunit protein uS19.